A 282-amino-acid polypeptide reads, in one-letter code: 4-hydroxy-3-methylbut-2-enyl diphosphate reductase (282 aa).

Residue C14 coordinates [4Fe-4S] cluster. (2E)-4-hydroxy-3-methylbut-2-enyl diphosphate is bound by residues H43 and H78. 2 residues coordinate dimethylallyl diphosphate: H43 and H78. Residues H43 and H78 each coordinate isopentenyl diphosphate. Position 100 (C100) interacts with [4Fe-4S] cluster. H128 provides a ligand contact to (2E)-4-hydroxy-3-methylbut-2-enyl diphosphate. H128 contributes to the dimethylallyl diphosphate binding site. Residue H128 coordinates isopentenyl diphosphate. E130 acts as the Proton donor in catalysis. T164 contacts (2E)-4-hydroxy-3-methylbut-2-enyl diphosphate. C192 contributes to the [4Fe-4S] cluster binding site. (2E)-4-hydroxy-3-methylbut-2-enyl diphosphate is bound by residues S220, S221, N222, and S266. Dimethylallyl diphosphate-binding residues include S220, S221, N222, and S266. 4 residues coordinate isopentenyl diphosphate: S220, S221, N222, and S266.

This sequence belongs to the IspH family. Requires [4Fe-4S] cluster as cofactor.

The enzyme catalyses isopentenyl diphosphate + 2 oxidized [2Fe-2S]-[ferredoxin] + H2O = (2E)-4-hydroxy-3-methylbut-2-enyl diphosphate + 2 reduced [2Fe-2S]-[ferredoxin] + 2 H(+). The catalysed reaction is dimethylallyl diphosphate + 2 oxidized [2Fe-2S]-[ferredoxin] + H2O = (2E)-4-hydroxy-3-methylbut-2-enyl diphosphate + 2 reduced [2Fe-2S]-[ferredoxin] + 2 H(+). It participates in isoprenoid biosynthesis; dimethylallyl diphosphate biosynthesis; dimethylallyl diphosphate from (2E)-4-hydroxy-3-methylbutenyl diphosphate: step 1/1. The protein operates within isoprenoid biosynthesis; isopentenyl diphosphate biosynthesis via DXP pathway; isopentenyl diphosphate from 1-deoxy-D-xylulose 5-phosphate: step 6/6. Functionally, catalyzes the conversion of 1-hydroxy-2-methyl-2-(E)-butenyl 4-diphosphate (HMBPP) into a mixture of isopentenyl diphosphate (IPP) and dimethylallyl diphosphate (DMAPP). Acts in the terminal step of the DOXP/MEP pathway for isoprenoid precursor biosynthesis. This Clostridium perfringens (strain ATCC 13124 / DSM 756 / JCM 1290 / NCIMB 6125 / NCTC 8237 / Type A) protein is 4-hydroxy-3-methylbut-2-enyl diphosphate reductase.